A 126-amino-acid chain; its full sequence is UPF0102 protein BH12350 (126 aa).

It belongs to the UPF0102 family.

The chain is UPF0102 protein BH12350 from Bartonella henselae (strain ATCC 49882 / DSM 28221 / CCUG 30454 / Houston 1) (Rochalimaea henselae).